The following is a 145-amino-acid chain: Cell division protein SepF (145 aa).

The tract at residues 21-41 (DKPQESTKAKEENVKPKHETP) is disordered. Basic and acidic residues predominate over residues 23-41 (PQESTKAKEENVKPKHETP).

It belongs to the SepF family. As to quaternary structure, homodimer. Interacts with FtsZ.

The protein resides in the cytoplasm. Cell division protein that is part of the divisome complex and is recruited early to the Z-ring. Probably stimulates Z-ring formation, perhaps through the cross-linking of FtsZ protofilaments. Its function overlaps with FtsA. This chain is Cell division protein SepF, found in Caldicellulosiruptor saccharolyticus (strain ATCC 43494 / DSM 8903 / Tp8T 6331).